The chain runs to 357 residues: Peptide chain release factor 1 (357 aa).

An N5-methylglutamine modification is found at Q234.

It belongs to the prokaryotic/mitochondrial release factor family. Methylated by PrmC. Methylation increases the termination efficiency of RF1.

The protein resides in the cytoplasm. In terms of biological role, peptide chain release factor 1 directs the termination of translation in response to the peptide chain termination codons UAG and UAA. The chain is Peptide chain release factor 1 from Lactococcus lactis subsp. cremoris (strain MG1363).